We begin with the raw amino-acid sequence, 116 residues long: Large ribosomal subunit protein uL18 (116 aa).

Belongs to the universal ribosomal protein uL18 family. Part of the 50S ribosomal subunit; part of the 5S rRNA/L5/L18/L25 subcomplex. Contacts the 5S and 23S rRNAs.

Functionally, this is one of the proteins that bind and probably mediate the attachment of the 5S RNA into the large ribosomal subunit, where it forms part of the central protuberance. The protein is Large ribosomal subunit protein uL18 of Alcanivorax borkumensis (strain ATCC 700651 / DSM 11573 / NCIMB 13689 / SK2).